We begin with the raw amino-acid sequence, 151 residues long: 1,4-dihydroxy-2-naphthoyl-CoA hydrolase (151 aa).

The active site involves Asp19.

Belongs to the 4-hydroxybenzoyl-CoA thioesterase family. DHNA-CoA hydrolase subfamily.

It carries out the reaction 1,4-dihydroxy-2-naphthoyl-CoA + H2O = 1,4-dihydroxy-2-naphthoate + CoA + H(+). It functions in the pathway cofactor biosynthesis; phylloquinone biosynthesis. Its pathway is quinol/quinone metabolism; 1,4-dihydroxy-2-naphthoate biosynthesis; 1,4-dihydroxy-2-naphthoate from chorismate: step 7/7. In terms of biological role, catalyzes the hydrolysis of 1,4-dihydroxy-2-naphthoyl-CoA (DHNA-CoA) to 1,4-dihydroxy-2-naphthoate (DHNA), a reaction involved in phylloquinone (vitamin K1) biosynthesis. This Prochlorococcus marinus (strain MIT 9303) protein is 1,4-dihydroxy-2-naphthoyl-CoA hydrolase.